We begin with the raw amino-acid sequence, 577 residues long: Scoloptoxin SSD14 (577 aa).

Residues 1-25 (MGTSYRKLGYVLFLMLGMIVEEGIA) form the signal peptide.

Heterodimer composed of subunits alpha and beta; probably disulfide-linked. As to expression, expressed by the venom gland.

It localises to the secreted. Functionally, dose-dependently induces human platelet aggregation on both plasma rich platelet and washed platelet (max. response at 3.2 ug/mL) and causes hemolysis against mouse and rabbit erythrocytes (35 and 65% respectively at 5 ug/mL). Does not show hemolytic activity against human erythrocytes (even at 100 ug/mL). This is Scoloptoxin SSD14 from Scolopendra dehaani (Thai centipede).